A 451-amino-acid polypeptide reads, in one-letter code: MSLEENVKEAKNAFNILQTLSVEDRDDALDKIVEELRIKKSEVLAANAEDMKAAKLLAESGKLSSSMVKRLDLSSSDKYDSMVQGVLDVKSLPDPLGRVTYARSLDDGLDLYKVSCPVGLLLVIFEARPEVIINITSLAIKSGNAVVLKGGTESAKSFAALSNVVRSALGKSKVPQAAVQLVQSREEVSQLLKLDEYIDLVIPRGSTNLVRHIKDNTKIPVLGHAAGLCSMYVHEDADMELASKLVLDGKTDYPAACNAIETLLINEAVLSSHLPKIAETLTEAKVTLKCDPASLKVLKDMPKVSALVEPSVDQDYNTEFSDLILAIKTVPSLQSAMQHINTHGSKHTDCIITSSEAAANRFMAGIDASGVYWNASTRFADGFRYGYGTEVGISTNKIHARGPMGLDGLTIYKYQLRGNGQVASSYGVGPGKRAFKHTPINIDNISQVSKK.

The protein belongs to the gamma-glutamyl phosphate reductase family.

The catalysed reaction is L-glutamate 5-semialdehyde + phosphate + NADP(+) = L-glutamyl 5-phosphate + NADPH + H(+). It participates in amino-acid biosynthesis; L-proline biosynthesis; L-glutamate 5-semialdehyde from L-glutamate: step 2/2. Catalyzes the NADPH dependent reduction of L-gamma-glutamyl 5-phosphate into L-glutamate 5-semialdehyde and phosphate. The product spontaneously undergoes cyclization to form 1-pyrroline-5-carboxylate. This Schizosaccharomyces pombe (strain 972 / ATCC 24843) (Fission yeast) protein is Probable gamma-glutamyl phosphate reductase (pro1).